The primary structure comprises 337 residues: Ribosomal RNA small subunit methyltransferase H (337 aa).

S-adenosyl-L-methionine is bound by residues 35–37 (GGY), aspartate 54, phenylalanine 81, aspartate 102, and glutamine 109. The tract at residues 286 to 316 (PVGPSEAEAAANPRARSAKLRAGERTDAPAP) is disordered. A compositionally biased stretch (low complexity) spans 289 to 300 (PSEAEAAANPRA).

The protein belongs to the methyltransferase superfamily. RsmH family.

It localises to the cytoplasm. It carries out the reaction cytidine(1402) in 16S rRNA + S-adenosyl-L-methionine = N(4)-methylcytidine(1402) in 16S rRNA + S-adenosyl-L-homocysteine + H(+). Specifically methylates the N4 position of cytidine in position 1402 (C1402) of 16S rRNA. This chain is Ribosomal RNA small subunit methyltransferase H, found in Methylobacterium sp. (strain 4-46).